The primary structure comprises 192 residues: Leucine-rich repeat-containing protein 51 (192 aa).

3 LRR repeats span residues 49-71 (SLTQSLWLNNNVLNDLKDFNQVV), 80-101 (NLAWIDLSFNDLTTIDPVLTTF), and 103-124 (NLSVLYLHGNGIHRLGEVNKLA). In terms of domain architecture, LRRCT spans 137–175 (NPIEEEKGYRQYVLCNLPRITTFDFSGVTRADRSTAEVW).

In terms of tissue distribution, widely expressed in adult and embryonic tissues. Expressed in the developing choroid plexus from 12.5 dpc and in the epithelium of the developing airway tract from 14.5 dpc. Also expressed in the postnatal inner ear.

The protein resides in the cytoplasm. The protein is Leucine-rich repeat-containing protein 51 of Mus musculus (Mouse).